Consider the following 586-residue polypeptide: Methionine--tRNA ligase, mitochondrial (586 aa).

The transit peptide at 1-46 directs the protein to the mitochondrion; that stretch reads MLRQCARWVLTRTRFGRGCRRYGSCSPSASGDAGEARAYFTTPIFY. The short motif at 45-55 is the 'HIGH' region element; the sequence is FYVNAAPHIGH. Positions 340–344 match the 'KMSKS' region motif; sequence KMSKS. K343 is an ATP binding site.

Belongs to the class-I aminoacyl-tRNA synthetase family.

It localises to the mitochondrion matrix. It carries out the reaction tRNA(Met) + L-methionine + ATP = L-methionyl-tRNA(Met) + AMP + diphosphate. The polypeptide is Methionine--tRNA ligase, mitochondrial (Mars2) (Mus musculus (Mouse)).